Consider the following 95-residue polypeptide: Large ribosomal subunit protein bL25 (95 aa).

It belongs to the bacterial ribosomal protein bL25 family. As to quaternary structure, part of the 50S ribosomal subunit; part of the 5S rRNA/L5/L18/L25 subcomplex. Contacts the 5S rRNA. Binds to the 5S rRNA independently of L5 and L18.

Functionally, this is one of the proteins that binds to the 5S RNA in the ribosome where it forms part of the central protuberance. In Shewanella sediminis (strain HAW-EB3), this protein is Large ribosomal subunit protein bL25.